The sequence spans 819 residues: Nuclear pore complex protein Nup93 (819 aa).

Thr-49 is modified (phosphothreonine). 7 positions are modified to phosphoserine: Ser-52, Ser-66, Ser-72, Ser-75, Ser-80, Ser-430, and Ser-767.

Belongs to the nucleoporin interacting component (NIC) family. In terms of assembly, part of the nuclear pore complex (NPC). Component of the p62 complex, a complex composed of NUP62 and NUP54. Forms a complex with NUP35, NUP155, NUP205 and lamin B; the interaction with NUP35 is direct. Does not interact with TPR. Interacts with SMAD4 and IPO7; translocates SMAD4 to the nucleus through the NPC upon BMP7 stimulation resulting in activation of SMAD4 signaling. (Microbial infection) Interacts with SARS-CoV translation inhibitor nsp1; this interaction may disrupt nuclear pore function.

It localises to the nucleus membrane. The protein resides in the nucleus. Its subcellular location is the nuclear pore complex. It is found in the nucleus envelope. In terms of biological role, plays a role in the nuclear pore complex (NPC) assembly and/or maintenance. May anchor nucleoporins, but not NUP153 and TPR, to the NPC. During renal development, regulates podocyte migration and proliferation through SMAD4 signaling. The protein is Nuclear pore complex protein Nup93 (NUP93) of Homo sapiens (Human).